The following is a 28-amino-acid chain: Somatostatin-2 (28 aa).

A disulfide bond links Cys17 and Cys28.

It belongs to the somatostatin family.

The protein resides in the secreted. Functionally, somatostatin inhibits the release of somatotropin. The protein is Somatostatin-2 (sst2) of Oreochromis niloticus (Nile tilapia).